A 249-amino-acid chain; its full sequence is Triosephosphate isomerase (249 aa).

Substrate is bound at residue 9 to 11; sequence NWK. Catalysis depends on histidine 95, which acts as the Electrophile. The active-site Proton acceptor is glutamate 166. Substrate contacts are provided by residues glycine 172, serine 211, and 232–233; that span reads GG.

Belongs to the triosephosphate isomerase family. As to quaternary structure, homodimer.

The protein localises to the cytoplasm. It catalyses the reaction D-glyceraldehyde 3-phosphate = dihydroxyacetone phosphate. The protein operates within carbohydrate biosynthesis; gluconeogenesis. It participates in carbohydrate degradation; glycolysis; D-glyceraldehyde 3-phosphate from glycerone phosphate: step 1/1. Involved in the gluconeogenesis. Catalyzes stereospecifically the conversion of dihydroxyacetone phosphate (DHAP) to D-glyceraldehyde-3-phosphate (G3P). The protein is Triosephosphate isomerase of Legionella pneumophila (strain Paris).